The chain runs to 60 residues: Cytotoxin 5 (60 aa).

Cystine bridges form between Cys3-Cys21, Cys14-Cys38, Cys42-Cys53, and Cys54-Cys59.

It belongs to the three-finger toxin family. Short-chain subfamily. Type IA cytotoxin sub-subfamily. As to quaternary structure, monomer in solution; Homodimer and oligomer in the presence of negatively charged lipids forming a pore with a size ranging between 20 and 30 Angstroms. As to expression, expressed by the venom gland.

The protein resides in the secreted. It localises to the target cell membrane. Functionally, shows cytolytic activity on many different cells by forming pore in lipid membranes. In vivo, increases heart rate or kills the animal by cardiac arrest. In addition, it binds to heparin with high affinity, interacts with Kv channel-interacting protein 1 (KCNIP1) in a calcium-independent manner, and binds to integrin alpha-V/beta-3 (ITGAV/ITGB3) with moderate affinity. The polypeptide is Cytotoxin 5 (Naja kaouthia (Monocled cobra)).